We begin with the raw amino-acid sequence, 572 residues long: NADP-dependent malic enzyme (572 aa).

M1 is subject to N-acetylmethionine. Catalysis depends on Y102, which acts as the Proton donor. R155 is an NADP(+) binding site. K173 (proton acceptor) is an active-site residue. 3 residues coordinate a divalent metal cation: E245, D246, and D269. NADP(+)-binding positions include D269 and 301 to 318; that span reads GAGE…MAME. S336 is subject to Phosphoserine. N408 provides a ligand contact to NADP(+).

Belongs to the malic enzymes family. As to quaternary structure, homotetramer. Mg(2+) serves as cofactor. Requires Mn(2+) as cofactor. Ubiquitous. Up-regulated by 3,5,3'-triiodo-L-thyronine in the liver, kidney and heart.

The protein resides in the cytoplasm. It catalyses the reaction (S)-malate + NADP(+) = pyruvate + CO2 + NADPH. The catalysed reaction is oxaloacetate + H(+) = pyruvate + CO2. Catalyzes the oxidative decarboxylation of (S)-malate in the presence of NADP(+) and divalent metal ions, and decarboxylation of oxaloacetate. The protein is NADP-dependent malic enzyme (Me1) of Rattus norvegicus (Rat).